The primary structure comprises 176 residues: Peptide methionine sulfoxide reductase MsrA (176 aa).

Residue Cys14 is part of the active site.

This sequence belongs to the MsrA Met sulfoxide reductase family.

It catalyses the reaction L-methionyl-[protein] + [thioredoxin]-disulfide + H2O = L-methionyl-(S)-S-oxide-[protein] + [thioredoxin]-dithiol. The catalysed reaction is [thioredoxin]-disulfide + L-methionine + H2O = L-methionine (S)-S-oxide + [thioredoxin]-dithiol. Its function is as follows. Has an important function as a repair enzyme for proteins that have been inactivated by oxidation. Catalyzes the reversible oxidation-reduction of methionine sulfoxide in proteins to methionine. This is Peptide methionine sulfoxide reductase MsrA from Halalkalibacterium halodurans (strain ATCC BAA-125 / DSM 18197 / FERM 7344 / JCM 9153 / C-125) (Bacillus halodurans).